Reading from the N-terminus, the 314-residue chain is Mitochondrial MRF1 N(5)-glutamine methyltransferase MTQ1 (314 aa).

Residues 118-122, D141, and N188 contribute to the S-adenosyl-L-methionine site; that span reads FTGTG. Substrate is bound at residue 188–191; it reads NPPY.

This sequence belongs to the protein N5-glutamine methyltransferase family.

The protein resides in the mitochondrion. The enzyme catalyses L-glutaminyl-[peptide chain release factor] + S-adenosyl-L-methionine = N(5)-methyl-L-glutaminyl-[peptide chain release factor] + S-adenosyl-L-homocysteine + H(+). In terms of biological role, methylates MRF1 on 'Gln-287' using S-adenosyl L-methionine as methyl donor. The protein is Mitochondrial MRF1 N(5)-glutamine methyltransferase MTQ1 (MTQ1) of Saccharomyces cerevisiae (strain ATCC 204508 / S288c) (Baker's yeast).